Here is a 161-residue protein sequence, read N- to C-terminus: Myosin regulatory light chain A, smooth adductor muscle (161 aa).

Residue A1 is modified to Blocked amino end (Ala). 2 consecutive EF-hand domains span residues 20–55 (KLMQEMKEAFTMIDQNRDGFIDINDLKEMFSSLGRT) and 89–124 (DTEETLRNAFAMFDELDTKKLNIEYIKDLLENMGDN). Ca(2+)-binding residues include D33, N35, D37, and D44.

In terms of biological role, in molluscan muscle, calcium regulation is associated with myosin rather than with actin. Muscle myosin contains two types of light chains: the catalytic light chain, essential for ATPase activity, and the regulatory light chain, a calcium-binding protein responsible for Ca(2+) dependent binding and Ca(2+) dependent Mg-ATPase activity. The protein is Myosin regulatory light chain A, smooth adductor muscle of Mizuhopecten yessoensis (Japanese scallop).